The primary structure comprises 495 residues: Trimethylamine methyltransferase MttB2 (495 aa).

Residue Pyl-334 is a non-standard amino acid, pyrrolysine.

Belongs to the trimethylamine methyltransferase family. In terms of assembly, can form a complex with MttC.

The catalysed reaction is Co(I)-[trimethylamine-specific corrinoid protein] + trimethylamine + H(+) = methyl-Co(III)-[trimethylamine-specific corrinoid protein] + dimethylamine. The protein operates within one-carbon metabolism; methanogenesis from trimethylamine. Functionally, catalyzes the transfer of a methyl group from trimethylamine to the corrinoid cofactor of MttC. The protein is Trimethylamine methyltransferase MttB2 (mttB2) of Methanosarcina mazei (strain ATCC BAA-159 / DSM 3647 / Goe1 / Go1 / JCM 11833 / OCM 88) (Methanosarcina frisia).